Reading from the N-terminus, the 247-residue chain is NAD-dependent protein deacetylase (247 aa).

In terms of domain architecture, Deacetylase sirtuin-type spans 1–247; the sequence is METFKSILHE…EFARSLGMKK (247 aa). 8 residues coordinate NAD(+): alanine 20, threonine 24, phenylalanine 31, arginine 32, glutamine 100, isoleucine 102, aspartate 103, and histidine 118. Phenylalanine 31 is a binding site for nicotinamide. Residues isoleucine 102 and aspartate 103 each coordinate nicotinamide. The active-site Proton acceptor is histidine 118. The Zn(2+) site is built by cysteine 126, cysteine 129, cysteine 146, and cysteine 156. The NAD(+) site is built by threonine 192, serine 193, asparagine 218, and isoleucine 236.

This sequence belongs to the sirtuin family. Class U subfamily. The cofactor is Zn(2+).

Its subcellular location is the cytoplasm. The catalysed reaction is N(6)-acetyl-L-lysyl-[protein] + NAD(+) + H2O = 2''-O-acetyl-ADP-D-ribose + nicotinamide + L-lysyl-[protein]. NAD-dependent protein deacetylase which modulates the activities of several enzymes which are inactive in their acetylated form. In Bacillus subtilis (strain 168), this protein is NAD-dependent protein deacetylase.